Reading from the N-terminus, the 144-residue chain is Large ribosomal subunit protein uL15 (144 aa).

Residues 1–58 form a disordered region; sequence MKLNNLSPAPGSKHAEKRVGRGIGSGLGKTGGRGHKGQKSRSGGSVKPGFEGGQMPLQ. The span at 21–31 shows a compositional bias: gly residues; sequence RGIGSGLGKTG.

This sequence belongs to the universal ribosomal protein uL15 family. As to quaternary structure, part of the 50S ribosomal subunit.

In terms of biological role, binds to the 23S rRNA. In Chromohalobacter salexigens (strain ATCC BAA-138 / DSM 3043 / CIP 106854 / NCIMB 13768 / 1H11), this protein is Large ribosomal subunit protein uL15.